The primary structure comprises 245 residues: 3-deoxy-manno-octulosonate cytidylyltransferase (245 aa).

It belongs to the KdsB family.

The protein resides in the cytoplasm. It catalyses the reaction 3-deoxy-alpha-D-manno-oct-2-ulosonate + CTP = CMP-3-deoxy-beta-D-manno-octulosonate + diphosphate. Its pathway is nucleotide-sugar biosynthesis; CMP-3-deoxy-D-manno-octulosonate biosynthesis; CMP-3-deoxy-D-manno-octulosonate from 3-deoxy-D-manno-octulosonate and CTP: step 1/1. It participates in bacterial outer membrane biogenesis; lipopolysaccharide biosynthesis. Functionally, activates KDO (a required 8-carbon sugar) for incorporation into bacterial lipopolysaccharide in Gram-negative bacteria. This chain is 3-deoxy-manno-octulosonate cytidylyltransferase, found in Acaryochloris marina (strain MBIC 11017).